Consider the following 72-residue polypeptide: Beta-defensin 104 (72 aa).

The N-terminal stretch at 1–22 (MQRLVLLLAISLLLYQDLPVRS) is a signal peptide. 3 cysteine pairs are disulfide-bonded: C30–C57, C37–C51, and C41–C58.

Belongs to the beta-defensin family. As to expression, high expression in the testis. Gastric antrum exhibited relatively high levels. A lower expression is observed in uterus and neutrophils thyroid gland, lung, and kidney. No detectable expression in other tissues tested.

The protein localises to the secreted. Functionally, has antimicrobial activity. Synergistic effects with lysozyme and DEFB103. This chain is Beta-defensin 104 (DEFB104A), found in Homo sapiens (Human).